Here is a 140-residue protein sequence, read N- to C-terminus: ATP synthase epsilon chain (140 aa).

The protein belongs to the ATPase epsilon chain family. In terms of assembly, F-type ATPases have 2 components, CF(1) - the catalytic core - and CF(0) - the membrane proton channel. CF(1) has five subunits: alpha(3), beta(3), gamma(1), delta(1), epsilon(1). CF(0) has three main subunits: a, b and c.

It is found in the cell inner membrane. Functionally, produces ATP from ADP in the presence of a proton gradient across the membrane. The polypeptide is ATP synthase epsilon chain (Yersinia pseudotuberculosis serotype O:1b (strain IP 31758)).